Here is a 538-residue protein sequence, read N- to C-terminus: Lipid scramblase CLPTM1L (538 aa).

Residues Met-1 to Ser-10 lie on the Cytoplasmic side of the membrane. A helical transmembrane segment spans residues Leu-11–Val-31. Over Tyr-32–Leu-284 the chain is Extracellular. N-linked (GlcNAc...) asparagine glycosylation is found at Asn-91 and Asn-101. The helical transmembrane segment at Tyr-285–Phe-305 threads the bilayer. Residues Lys-306–Lys-324 are Cytoplasmic-facing. Residues Ala-325 to Leu-341 form a helical membrane-spanning segment. At Asp-342–Lys-402 the chain is on the extracellular side. A helical membrane pass occupies residues Tyr-403 to Ile-423. At Lys-424 to Trp-428 the chain is on the cytoplasmic side. The helical transmembrane segment at Tyr-429–Leu-449 threads the bilayer. Residues Pro-450 to Asp-538 lie on the Extracellular side of the membrane.

Belongs to the CLPTM1 family.

The protein resides in the endoplasmic reticulum membrane. It carries out the reaction a 6-(alpha-D-glucosaminyl)-1-(1,2-diacyl-sn-glycero-3-phospho)-1D-myo-inositol(in) = a 6-(alpha-D-glucosaminyl)-1-(1,2-diacyl-sn-glycero-3-phospho)-1D-myo-inositol(out). It catalyses the reaction 6-(alpha-D-glucosaminyl)-(1-octadecanoyl,2-(9Z)-octadecenoyl-sn-glycero-3-phospho)-1D-myo-inositol(in) = 6-(alpha-D-glucosaminyl)-(1-octadecanoyl,2-(9Z)-octadecenoyl-sn-glycero-3-phospho)-1D-myo-inositol(out). The catalysed reaction is a 1,2-diacyl-sn-glycero-3-phospho-(1D-myo-inositol)(in) = a 1,2-diacyl-sn-glycero-3-phospho-(1D-myo-inositol)(out). The enzyme catalyses a 1,2-diacyl-sn-glycero-3-phosphocholine(in) = a 1,2-diacyl-sn-glycero-3-phosphocholine(out). It carries out the reaction a 1,2-diacyl-sn-glycero-3-phosphoethanolamine(in) = a 1,2-diacyl-sn-glycero-3-phosphoethanolamine(out). Its function is as follows. Scramblase that mediates the translocation of glucosaminylphosphatidylinositol (alpha-D-GlcN-(1-6)-(1,2-diacyl-sn-glycero-3-phospho)-1D-myo-inositol, GlcN-PI) across the endoplasmic reticulum (ER) membrane, from the cytosolic leaflet to the luminal leaflet of the ER membrane, where it participates in the biosynthesis of glycosylphosphatidylinositol (GPI). GPI is a lipid glycoconjugate involved in post-translational modification of proteins. Can also translocate 1,2-diacyl-sn-glycero-3-phospho-(1D-myo-inositol) (phosphatidylinositol or PI), as well as several other phospholipids (1,2-diacyl-sn-glycero-3-phosphocholine, 1,2-diacyl-sn-glycero-3-phosphoethanolamine), and N-acetylglucosaminylphosphatidylinositol (GlcNAc-PI) in vitro. This is Lipid scramblase CLPTM1L (CLPTM1L) from Bos taurus (Bovine).